A 354-amino-acid polypeptide reads, in one-letter code: UDP-N-acetylglucosamine--N-acetylmuramyl-(pentapeptide) pyrophosphoryl-undecaprenol N-acetylglucosamine transferase 3 (354 aa).

UDP-N-acetyl-alpha-D-glucosamine is bound by residues 12–14 (TAG), Arg163, Ser193, and Gln287.

Belongs to the glycosyltransferase 28 family. MurG subfamily.

It is found in the cell membrane. It catalyses the reaction di-trans,octa-cis-undecaprenyl diphospho-N-acetyl-alpha-D-muramoyl-L-alanyl-D-glutamyl-meso-2,6-diaminopimeloyl-D-alanyl-D-alanine + UDP-N-acetyl-alpha-D-glucosamine = di-trans,octa-cis-undecaprenyl diphospho-[N-acetyl-alpha-D-glucosaminyl-(1-&gt;4)]-N-acetyl-alpha-D-muramoyl-L-alanyl-D-glutamyl-meso-2,6-diaminopimeloyl-D-alanyl-D-alanine + UDP + H(+). It functions in the pathway cell wall biogenesis; peptidoglycan biosynthesis. Cell wall formation. Catalyzes the transfer of a GlcNAc subunit on undecaprenyl-pyrophosphoryl-MurNAc-pentapeptide (lipid intermediate I) to form undecaprenyl-pyrophosphoryl-MurNAc-(pentapeptide)GlcNAc (lipid intermediate II). The polypeptide is UDP-N-acetylglucosamine--N-acetylmuramyl-(pentapeptide) pyrophosphoryl-undecaprenol N-acetylglucosamine transferase 3 (Bacillus cereus (strain ATCC 14579 / DSM 31 / CCUG 7414 / JCM 2152 / NBRC 15305 / NCIMB 9373 / NCTC 2599 / NRRL B-3711)).